The chain runs to 600 residues: UvrABC system protein C (600 aa).

The region spanning 15–100 (NSAGVYQYFN…IKQLHPKYNI (86 aa)) is the GIY-YIG domain. The 36-residue stretch at 203–238 (SILIKNLEKQMLVLAQNENYEEAAKVRDQIVTIKDL) folds into the UVR domain.

This sequence belongs to the UvrC family. In terms of assembly, interacts with UvrB in an incision complex.

Its subcellular location is the cytoplasm. Its function is as follows. The UvrABC repair system catalyzes the recognition and processing of DNA lesions. UvrC both incises the 5' and 3' sides of the lesion. The N-terminal half is responsible for the 3' incision and the C-terminal half is responsible for the 5' incision. This is UvrABC system protein C from Campylobacter jejuni subsp. jejuni serotype O:23/36 (strain 81-176).